We begin with the raw amino-acid sequence, 176 residues long: Disulfide bond formation protein B (176 aa).

Residues 1-14 lie on the Cytoplasmic side of the membrane; that stretch reads MLRFLNQCSHGRGA. The helical transmembrane segment at 15 to 31 threads the bilayer; the sequence is WLLMAFTALALELTALW. Residues 32-49 are Periplasmic-facing; sequence FQHVMLLKPCVLCIYERC. An intrachain disulfide couples cysteine 41 to cysteine 44. Residues 50 to 65 traverse the membrane as a helical segment; that stretch reads ALFGVLGAALIGAIAP. Residues 66–71 are Cytoplasmic-facing; that stretch reads KTPLRY. Residues 72-89 traverse the membrane as a helical segment; sequence VAMVIWLYSAFRGVQLTY. The Periplasmic segment spans residues 90–144; that stretch reads EHTMLQLYPSPFATCDFMARFPEWLPLDKWVPQVFVASGDCAERQWEFLGLEMPQ. Cysteine 104 and cysteine 130 are disulfide-bonded. A helical transmembrane segment spans residues 145–163; the sequence is WLLGIFIAYLIVAVLVVIS. The Cytoplasmic segment spans residues 164 to 176; sequence QPFKAKKRDLFGR.

Belongs to the DsbB family.

The protein resides in the cell inner membrane. In terms of biological role, required for disulfide bond formation in some periplasmic proteins. Acts by oxidizing the DsbA protein. The protein is Disulfide bond formation protein B of Escherichia coli O6:K15:H31 (strain 536 / UPEC).